Consider the following 339-residue polypeptide: 1-aminocyclopropane-1-carboxylate deaminase (339 aa).

At lysine 52 the chain carries N6-(pyridoxal phosphate)lysine. The active-site Nucleophile is the serine 79.

This sequence belongs to the ACC deaminase/D-cysteine desulfhydrase family. In terms of assembly, homotrimer. The cofactor is pyridoxal 5'-phosphate.

The catalysed reaction is 1-aminocyclopropane-1-carboxylate + H2O = 2-oxobutanoate + NH4(+). Functionally, catalyzes a cyclopropane ring-opening reaction, the irreversible conversion of 1-aminocyclopropane-1-carboxylate (ACC) to ammonia and alpha-ketobutyrate. Allows growth on ACC as a nitrogen source. In Bradyrhizobium sp. (strain ORS 278), this protein is 1-aminocyclopropane-1-carboxylate deaminase.